A 255-amino-acid polypeptide reads, in one-letter code: Small ribosomal subunit protein uS2 (255 aa).

Residues 230–255 are disordered; it reads QGSSGRDLGASSEVPVEPALEEAAEG.

Belongs to the universal ribosomal protein uS2 family.

The sequence is that of Small ribosomal subunit protein uS2 from Rhizobium johnstonii (strain DSM 114642 / LMG 32736 / 3841) (Rhizobium leguminosarum bv. viciae).